The chain runs to 87 residues: NADH dehydrogenase [ubiquinone] 1 alpha subcomplex subunit 4-like 2 (87 aa).

Belongs to the complex I NDUFA4 subunit family.

This chain is NADH dehydrogenase [ubiquinone] 1 alpha subcomplex subunit 4-like 2 (Ndufa4l2), found in Mus musculus (Mouse).